Consider the following 95-residue polypeptide: Citrate lyase acyl carrier protein (95 aa).

S14 is subject to O-(phosphoribosyl dephospho-coenzyme A)serine.

This sequence belongs to the CitD family. As to quaternary structure, oligomer with a subunit composition of (alpha,beta,gamma)6.

The protein localises to the cytoplasm. Functionally, covalent carrier of the coenzyme of citrate lyase. This is Citrate lyase acyl carrier protein from Haemophilus influenzae (strain 86-028NP).